The primary structure comprises 400 residues: Protein phosphatase methylesterase 1 (400 aa).

The interval 1-72 (MSDLQRTWAK…NQKLFARPQG (72 aa)) is disordered. Positions 19 to 28 (PFDEPQEEQG) are enriched in acidic residues. The span at 44 to 54 (SSASSASSVSS) shows a compositional bias: low complexity. Residues 55–64 (TGTIIPSPNQ) are compositionally biased toward polar residues. Catalysis depends on residues S202, D228, and H358.

The protein belongs to the AB hydrolase superfamily.

The enzyme catalyses [phosphatase 2A protein]-C-terminal L-leucine methyl ester + H2O = [phosphatase 2A protein]-C-terminal L-leucine + methanol + H(+). Functionally, demethylates proteins that have been reversibly carboxymethylated. Demethylates the phosphatase PP2A catalytic subunit. This chain is Protein phosphatase methylesterase 1 (PPE1), found in Gibberella zeae (strain ATCC MYA-4620 / CBS 123657 / FGSC 9075 / NRRL 31084 / PH-1) (Wheat head blight fungus).